The sequence spans 514 residues: 2-isopropylmalate synthase (514 aa).

Positions 5-268 constitute a Pyruvate carboxyltransferase domain; the sequence is LIIFDTTLRD…DVGIDTTQIV (264 aa). The Mn(2+) site is built by Asp14, His202, His204, and Asn239. The tract at residues 395–514 is regulatory domain; that stretch reads KFVSLSQRSE…KDDKLNPQRA (120 aa).

The protein belongs to the alpha-IPM synthase/homocitrate synthase family. LeuA type 1 subfamily. Homodimer. Mn(2+) serves as cofactor.

The protein resides in the cytoplasm. The enzyme catalyses 3-methyl-2-oxobutanoate + acetyl-CoA + H2O = (2S)-2-isopropylmalate + CoA + H(+). It participates in amino-acid biosynthesis; L-leucine biosynthesis; L-leucine from 3-methyl-2-oxobutanoate: step 1/4. In terms of biological role, catalyzes the condensation of the acetyl group of acetyl-CoA with 3-methyl-2-oxobutanoate (2-ketoisovalerate) to form 3-carboxy-3-hydroxy-4-methylpentanoate (2-isopropylmalate). The polypeptide is 2-isopropylmalate synthase (Burkholderia cenocepacia (strain HI2424)).